The following is a 124-amino-acid chain: Protein MGF 110-4L (124 aa).

Residues 1–18 form the signal peptide; that stretch reads MLVIFLGILGLLANQVLG. Asparagine 64 carries an N-linked (GlcNAc...) asparagine; by host glycan. Residues 121–124 carry the Prevents secretion from ER motif; it reads KEDL.

It belongs to the asfivirus MGF 110 family.

The protein localises to the virion. It localises to the host endoplasmic reticulum-Golgi intermediate compartment. In terms of biological role, causes the redistribution of lumenal ER protein to an enlarged ERGIC compartment. This chain is Protein MGF 110-4L, found in Ornithodoros (relapsing fever ticks).